Consider the following 122-residue polypeptide: Large ribosomal subunit protein uL14c (122 aa).

The protein belongs to the universal ribosomal protein uL14 family. As to quaternary structure, part of the 50S ribosomal subunit.

It is found in the plastid. The protein resides in the chloroplast. Binds to 23S rRNA. This chain is Large ribosomal subunit protein uL14c (rpl14), found in Bigelowiella natans (Pedinomonas minutissima).